The chain runs to 443 residues: MKAVLPDSKMPKRWYNILPDLPEPLAPPLDPETDEPMESEKLLRIFASELVKQEMSMERYIDIPKKVRELYAKIGRPTPLFRATNLEKALETPARIYFKYEGATVTGSHKINTALAQAYYAKKQGIERLVTETGAGQWGTALSLAGALMGINVRVYMARASFYQKPYRKTIMRLYGAEIYPSPSDRTEIGRKFLSEDPNHPGGLGIAISEAIEDVLRDEKARYALGSVLNHVLMHQTVIGLEAKEQMKEFEDPDVIIGCVGGGSNFAGLAYPFVKDRLDGKADYEFIAVEPRAAPSMTRGVYTYDYGDSGGLTPKMKMHTLGHTYYVPPIHAGGLRYHGLAPTLSILINHGIVRPVAYHQTEVFEAARLFAKTEGIVPAPESAHAVKAAIDRALKAKEEGKEEVILFNLSGHGLLDLKGYEDFLDGKLEDYEPEELPALRGEV.

The residue at position 110 (Lys110) is an N6-(pyridoxal phosphate)lysine.

This sequence belongs to the TrpB family. As to quaternary structure, tetramer of two alpha and two beta chains. The cofactor is pyridoxal 5'-phosphate.

It catalyses the reaction (1S,2R)-1-C-(indol-3-yl)glycerol 3-phosphate + L-serine = D-glyceraldehyde 3-phosphate + L-tryptophan + H2O. It participates in amino-acid biosynthesis; L-tryptophan biosynthesis; L-tryptophan from chorismate: step 5/5. In terms of biological role, the beta subunit is responsible for the synthesis of L-tryptophan from indole and L-serine. This Thermococcus onnurineus (strain NA1) protein is Tryptophan synthase beta chain.